The chain runs to 215 residues: Adenylyl-sulfate kinase (215 aa).

46–53 (GLSGAGKS) provides a ligand contact to ATP. S120 functions as the Phosphoserine intermediate in the catalytic mechanism.

This sequence belongs to the APS kinase family.

It carries out the reaction adenosine 5'-phosphosulfate + ATP = 3'-phosphoadenylyl sulfate + ADP + H(+). It functions in the pathway sulfur metabolism; hydrogen sulfide biosynthesis; sulfite from sulfate: step 2/3. Its function is as follows. Catalyzes the synthesis of activated sulfate. The chain is Adenylyl-sulfate kinase (cysC) from Vibrio cholerae serotype O1 (strain ATCC 39315 / El Tor Inaba N16961).